Consider the following 495-residue polypeptide: UDP-N-acetylmuramoyl-L-alanyl-D-glutamate--2,6-diaminopimelate ligase (495 aa).

Ser29 lines the UDP-N-acetyl-alpha-D-muramoyl-L-alanyl-D-glutamate pocket. 111 to 117 (GTNGKTS) is an ATP binding site. Residues 153-154 (TT), Ser180, Gln186, and Arg188 each bind UDP-N-acetyl-alpha-D-muramoyl-L-alanyl-D-glutamate. At Lys220 the chain carries N6-carboxylysine. Meso-2,6-diaminopimelate contacts are provided by residues Arg384, 408-411 (DNPR), Gly459, and Glu463. The short motif at 408–411 (DNPR) is the Meso-diaminopimelate recognition motif element.

This sequence belongs to the MurCDEF family. MurE subfamily. Mg(2+) serves as cofactor. Post-translationally, carboxylation is probably crucial for Mg(2+) binding and, consequently, for the gamma-phosphate positioning of ATP.

The protein localises to the cytoplasm. It carries out the reaction UDP-N-acetyl-alpha-D-muramoyl-L-alanyl-D-glutamate + meso-2,6-diaminopimelate + ATP = UDP-N-acetyl-alpha-D-muramoyl-L-alanyl-gamma-D-glutamyl-meso-2,6-diaminopimelate + ADP + phosphate + H(+). It functions in the pathway cell wall biogenesis; peptidoglycan biosynthesis. Functionally, catalyzes the addition of meso-diaminopimelic acid to the nucleotide precursor UDP-N-acetylmuramoyl-L-alanyl-D-glutamate (UMAG) in the biosynthesis of bacterial cell-wall peptidoglycan. The protein is UDP-N-acetylmuramoyl-L-alanyl-D-glutamate--2,6-diaminopimelate ligase of Xanthomonas campestris pv. campestris (strain 8004).